The chain runs to 707 residues: MADLEAVLADVSYLMAMEKSRSQPAARASKRIVLPDPSVRSIMQKFLEKSGDMKFDKIFNQKLGFLLLKDYAENVSESPCPQIKFYEAIKEYEKMETPDERLTKAREIYDHHIMVEMLAHAHNYSKESLQHVQYHLLKQNVPPDLFHRYVLEICDQLRGDIFQRFLESDKFTRFCQWKNLELNMQLTMNDFSVHRIIGRGGFGEVYGCRKADTGKMYAMKCLDKKRIKMKQGETLALNERIMLSLVSTGQDCPFIVCMTYAFQSPDKLCFILDLMNGGDLHYHLSQHGVFTEQEMIFYASEVILGLEHMHNRFVVYRDLKPANILLDENGHVRVSDLGLACDYSKKKPHASVGTHGYMAPEVLAKGVAYDSSADWFSLGCMLYKLLKGHSPFRQHKSKDKNEIDKMTLTQDIELPNEGLSKDCRDLLEGLLKRDVPDRLGCRGKGPTEVKEHPFFKDVDWQTVYLRRMTPPLIPPRGEVNAADAFDIGNFDDDEVKGVKLQDGDSDLYKNFNIVISERWQNEIAETIFEVVNQDADKAESKKRSKQKIKVAVEEKDSDVIVHGYIKKLGGPFTSAWQTKYGKLYPSRLELYPESLTAKPELVFMDQIEDVCAEMQTIKGETAIIVKLRDGFKEPKICLTNSDEISLKEWHTSLRTAHKVSQELLQRMGRKAIKIYGVNHDPMLSESERPGSVTRAFLNRASSVDSGV.

Residues 1–190 form an N-terminal region; sequence MADLEAVLAD…ELNMQLTMND (190 aa). Residues 54-175 enclose the RGS domain; it reads KFDKIFNQKL…LESDKFTRFC (122 aa). One can recognise a Protein kinase domain in the interval 191-455; that stretch reads FSVHRIIGRG…PTEVKEHPFF (265 aa). Residues 197–205 and lysine 220 contribute to the ATP site; that span reads IGRGGFGEV. Aspartate 318 functions as the Proton acceptor in the catalytic mechanism. Positions 456–523 constitute an AGC-kinase C-terminal domain; that stretch reads KDVDWQTVYL…VISERWQNEI (68 aa). A PH domain is found at 558–658; it reads DVIVHGYIKK…WHTSLRTAHK (101 aa).

Belongs to the protein kinase superfamily. AGC Ser/Thr protein kinase family. GPRK subfamily. As to quaternary structure, interacts with amx-2; the interaction promotes phosphorylation of amx-2. As to expression, expressed in many neurons in the adult including the ASH neurons and other sensory neurons, many interneurons, and motor neurons of the ventral nerve cord. Expressed broadly in head neurons and is detected in several head acetylcholine neurons including the AVA, AVB, AVD and AVE premotor interneurons, the SMD and RMD head motor neurons, and the AIN, AIY, SIA, SIB and SAA interneurons. Expressed in HSN motor neurons and VC4/VC5 motor neurons. Also expressed in vulval muscle cells. Expressed in premotor and RIS interneurons. Expressed in ciliated neurons such as AWA, AWB, AWC, ASH and ADF olfactory and nociceptive neurons, and in chemosensory ASH neurons. Expressed in RMG neurons and AVK interneurons.

The catalysed reaction is [G-protein-coupled receptor] + ATP = [G-protein-coupled receptor]-phosphate + ADP + H(+). Specifically phosphorylates the activated forms of G protein-coupled receptors. Required in adult sensory neurons for chemotaxis. Plays a role in the ASH sensory neurons in the chemotaxis response to NaCl where it is likely to modulate the strength of the NaCl avoidance response which occurs at high NaCl concentrations. Required in the HSN motor neurons for normal egg laying by promoting phosphorylation of amine oxidase amx-2 which inhibits amx-2 activity, preventing metabolism of serotonin. Acts in head acetylcholine neurons to positively regulate locomotion. Inactivates dopamine receptor dop-3 which leads to inactivation of guanine nucleotide-binding protein G(o) subunit goa-1 and activation of the unc-77/nca-1 and nca-2 ion channel proteins. Acts as a positive regulator of swimming by inactivating two dopamine receptors, dop-3 in the premotor interneurons that negatively controls early swimming through the nca ion channel, and dop-1 in the RIS neuron that inhibits late-stage swimming via the signaling of FMRFamide-like neuropeptide flp-11. Controls movement quiescence by negatively regulating multiple targets including egl-4 in ciliated neurons, the level of ligands of the neuropeptide receptor npr-1 in RMG neurons, and the secretion of flp-1 from AVK interneurons. This is G protein-coupled receptor kinase 2 (grk-2) from Caenorhabditis elegans.